A 180-amino-acid chain; its full sequence is ATP synthase subunit delta (180 aa).

This sequence belongs to the ATPase delta chain family. In terms of assembly, F-type ATPases have 2 components, F(1) - the catalytic core - and F(0) - the membrane proton channel. F(1) has five subunits: alpha(3), beta(3), gamma(1), delta(1), epsilon(1). CF(0) has four main subunits: a(1), b(1), b'(1) and c(10-14). The alpha and beta chains form an alternating ring which encloses part of the gamma chain. F(1) is attached to F(0) by a central stalk formed by the gamma and epsilon chains, while a peripheral stalk is formed by the delta, b and b' chains.

The protein localises to the cellular thylakoid membrane. In terms of biological role, f(1)F(0) ATP synthase produces ATP from ADP in the presence of a proton or sodium gradient. F-type ATPases consist of two structural domains, F(1) containing the extramembraneous catalytic core and F(0) containing the membrane proton channel, linked together by a central stalk and a peripheral stalk. During catalysis, ATP synthesis in the catalytic domain of F(1) is coupled via a rotary mechanism of the central stalk subunits to proton translocation. This protein is part of the stalk that links CF(0) to CF(1). It either transmits conformational changes from CF(0) to CF(1) or is implicated in proton conduction. This chain is ATP synthase subunit delta, found in Prochlorococcus marinus (strain MIT 9215).